The following is a 289-amino-acid chain: Zinc finger matrin-type protein 3 (289 aa).

Matrin-type zinc fingers lie at residues Leu70–Asn100 and Asp147–Leu177. Disordered regions lie at residues Ala180 to Glu202 and Glu265 to Gln289. Residues Phe245–Glu275 form a Matrin-type 3 zinc finger. Over residues Glu265 to Met282 the composition is skewed to basic and acidic residues.

Interacts with dsRNA. Highly expressed in brain, gut, lung, and testis.

The protein localises to the nucleus. Its subcellular location is the nucleolus. In terms of biological role, acts as a bona fide target gene of p53/TP53. May play a role in the TP53-dependent growth regulatory pathway. May contribute to TP53-mediated apoptosis by regulation of TP53 expression and translocation to the nucleus and nucleolus. The protein is Zinc finger matrin-type protein 3 of Rattus norvegicus (Rat).